Consider the following 212-residue polypeptide: tRNA (guanine-N(7)-)-methyltransferase (212 aa).

S-adenosyl-L-methionine-binding residues include Glu44, Glu69, Asp96, and Asp118. Residue Asp118 is part of the active site. Substrate is bound at residue Lys122. The interaction with RNA stretch occupies residues 124-129; sequence RHEKRR. Substrate-binding positions include Asp154 and 192 to 195; that span reads TEYE.

It belongs to the class I-like SAM-binding methyltransferase superfamily. TrmB family.

The catalysed reaction is guanosine(46) in tRNA + S-adenosyl-L-methionine = N(7)-methylguanosine(46) in tRNA + S-adenosyl-L-homocysteine. It participates in tRNA modification; N(7)-methylguanine-tRNA biosynthesis. Its function is as follows. Catalyzes the formation of N(7)-methylguanine at position 46 (m7G46) in tRNA. The polypeptide is tRNA (guanine-N(7)-)-methyltransferase (Pediococcus pentosaceus (strain ATCC 25745 / CCUG 21536 / LMG 10740 / 183-1w)).